The sequence spans 37 residues: Large ribosomal subunit protein bL36 (37 aa).

The protein belongs to the bacterial ribosomal protein bL36 family.

This Synechococcus sp. (strain RCC307) protein is Large ribosomal subunit protein bL36.